Reading from the N-terminus, the 169-residue chain is Disulfide bond formation protein B 1 (169 aa).

Residues 1 to 14 (MSDNTLYLRREKRF) lie on the Cytoplasmic side of the membrane. Residues 15 to 31 (LVLLGIICLALIGGALY) form a helical membrane-spanning segment. At 32–49 (MQVVLDEAPCPLCILQRY) the chain is on the periplasmic side. An intrachain disulfide couples Cys41 to Cys44. A helical membrane pass occupies residues 50-65 (ALLFIAIFAFIGAAMP). Residues 66–72 (GRRSVTA) are Cytoplasmic-facing. Residues 73–89 (FETLVTLSALGGIAAAG) form a helical membrane-spanning segment. The Periplasmic segment spans residues 90–144 (RHVWILAHPSDSCGIDVLQPIVDGLPLATLFPTGFQVSGFCTTPYPPVLGLSLAQ). A disulfide bridge connects residues Cys102 and Cys130. The chain crosses the membrane as a helical span at residues 145–163 (WALTAFVLTAVLVPACIIR). Residues 164–169 (NRRKPY) lie on the Cytoplasmic side of the membrane.

It belongs to the DsbB family.

The protein resides in the cell inner membrane. In terms of biological role, required for disulfide bond formation in some periplasmic proteins. Acts by oxidizing the DsbA protein. The protein is Disulfide bond formation protein B 1 of Pseudomonas syringae pv. syringae (strain B728a).